Reading from the N-terminus, the 118-residue chain is V-type proton ATPase subunit G 3 (118 aa).

Residues 1–12 (MTSQSQGIQQLL) show a composition bias toward polar residues. The tract at residues 1–44 (MTSQSQGIQQLLQAEKRAKDKLDEAKKRKGKRLRQAKEEAVAET) is disordered. Residues 5 to 53 (SQGIQQLLQAEKRAKDKLDEAKKRKGKRLRQAKEEAVAETDQYRMQMEK) are a coiled coil. Over residues 14-26 (AEKRAKDKLDEAK) the composition is skewed to basic and acidic residues.

The protein belongs to the V-ATPase G subunit family. V-ATPase is a heteromultimeric enzyme made up of two complexes: the ATP-hydrolytic V1 complex and the proton translocation V0 complex. The V1 complex consists of three catalytic AB heterodimers that form a heterohexamer, three peripheral stalks each consisting of EG heterodimers, one central rotor including subunits D and F, and the regulatory subunits C and H. The proton translocation complex V0 consists of the proton transport subunit a, a ring of proteolipid subunits c9c'', rotary subunit d, subunits e and f, and the accessory subunits ATP6AP1/Ac45 and ATP6AP2/PRR. Kidney.

In terms of biological role, subunit of the V1 complex of vacuolar(H+)-ATPase (V-ATPase), a multisubunit enzyme composed of a peripheral complex (V1) that hydrolyzes ATP and a membrane integral complex (V0) that translocates protons. V-ATPase is responsible for acidifying and maintaining the pH of intracellular compartments and in some cell types, is targeted to the plasma membrane, where it is responsible for acidifying the extracellular environment. This Mus musculus (Mouse) protein is V-type proton ATPase subunit G 3 (Atp6v1g3).